A 258-amino-acid chain; its full sequence is Calcium release-activated calcium channel protein 1 (258 aa).

Topologically, residues 1-63 (MYPECGVETK…SRAKLKASSR (63 aa)) are cytoplasmic. A helical transmembrane segment spans residues 64–81 (TSALLSGFAMVAMVEVQL). Topologically, residues 82–91 (EPNHAYPPGL) are extracellular. The helical transmembrane segment at 92-112 (LIAFSACTTVLVAVHLFALMV) threads the bilayer. The Cytoplasmic segment spans residues 113-145 (STCILPNIEAVSNVHNLNSVKESPHERMHHHIE). The chain crosses the membrane as a helical span at residues 146–166 (LAWAFSTVIGTLLFLAEVVLL). The Extracellular portion of the chain corresponds to 167-192 (CWVKFLPVNSPKISSNETSAVSSGQA). An N-linked (GlcNAc...) asparagine glycan is attached at Asn-182. Residues 193-213 (AAITSTAIMVPFGLVFIVFAV) traverse the membrane as a helical segment. At 214–258 (HFYRSLVSHKTDRQFQELNELAELAQLQDQLDHRGDPVQSPVHYA) the chain is on the cytoplasmic side.

Belongs to the Orai family.

The protein resides in the cell membrane. Its function is as follows. Ca(2+) release-activated Ca(2+) (CRAC) channel subunit which mediates Ca(2+) influx following depletion of intracellular Ca(2+) stores. This is Calcium release-activated calcium channel protein 1 (orai1) from Xenopus laevis (African clawed frog).